The following is a 555-amino-acid chain: Glutamate--tRNA ligase (555 aa).

Positions Pro100–His110 match the 'HIGH' region motif.

The protein belongs to the class-I aminoacyl-tRNA synthetase family. Glutamate--tRNA ligase type 2 subfamily.

The protein localises to the cytoplasm. The catalysed reaction is tRNA(Glu) + L-glutamate + ATP = L-glutamyl-tRNA(Glu) + AMP + diphosphate. Functionally, catalyzes the attachment of glutamate to tRNA(Glu) in a two-step reaction: glutamate is first activated by ATP to form Glu-AMP and then transferred to the acceptor end of tRNA(Glu). The chain is Glutamate--tRNA ligase from Methanococcus maripaludis (strain DSM 14266 / JCM 13030 / NBRC 101832 / S2 / LL).